The following is a 117-amino-acid chain: UPF0321 protein PJ695.01c (117 aa).

An N-terminal signal peptide occupies residues 1–17 (MLLLLYICCLFLKFILA). Residues Asn-39, Asn-65, Asn-71, and Asn-104 are each glycosylated (N-linked (GlcNAc...) asparagine).

Belongs to the UPF0321 family.

The polypeptide is UPF0321 protein PJ695.01c (Schizosaccharomyces pombe (strain 972 / ATCC 24843) (Fission yeast)).